The sequence spans 232 residues: Large ribosomal subunit protein uL1 (232 aa).

This sequence belongs to the universal ribosomal protein uL1 family. Part of the 50S ribosomal subunit.

Functionally, binds directly to 23S rRNA. The L1 stalk is quite mobile in the ribosome, and is involved in E site tRNA release. Protein L1 is also a translational repressor protein, it controls the translation of the L11 operon by binding to its mRNA. This is Large ribosomal subunit protein uL1 from Dichelobacter nodosus (strain VCS1703A).